We begin with the raw amino-acid sequence, 445 residues long: Phosphoglucosamine mutase (445 aa).

The active-site Phosphoserine intermediate is the Ser104. Residues Ser104, Asp243, Asp245, and Asp247 each contribute to the Mg(2+) site. Phosphoserine is present on Ser104.

Belongs to the phosphohexose mutase family. Mg(2+) is required as a cofactor. In terms of processing, activated by phosphorylation.

The catalysed reaction is alpha-D-glucosamine 1-phosphate = D-glucosamine 6-phosphate. Its function is as follows. Catalyzes the conversion of glucosamine-6-phosphate to glucosamine-1-phosphate. The polypeptide is Phosphoglucosamine mutase (Chromobacterium violaceum (strain ATCC 12472 / DSM 30191 / JCM 1249 / CCUG 213 / NBRC 12614 / NCIMB 9131 / NCTC 9757 / MK)).